We begin with the raw amino-acid sequence, 439 residues long: Xylose isomerase (439 aa).

Catalysis depends on residues His101 and Asp104. Mg(2+)-binding residues include Glu232, Glu268, His271, Asp296, Asp307, Asp309, and Asp339.

It belongs to the xylose isomerase family. Homotetramer. Requires Mg(2+) as cofactor.

Its subcellular location is the cytoplasm. The catalysed reaction is alpha-D-xylose = alpha-D-xylulofuranose. The chain is Xylose isomerase (xylA) from Thermoanaerobacterium saccharolyticum.